A 495-amino-acid polypeptide reads, in one-letter code: MSEEMNDQMQVRRQKLQELYDLGIDPFGQKFDRTSMATPLHEDWDQFSKEELHEKEEESHVSIAGRLMTKRGKGKAGFAHVQDLSGQIQIYVRKDQVGEDQFAIWNSADLGDIVGVEGVMFKTNTGELSVKAQSFTLLTKALRPLPDKFHGLQDIEQRYRQRYLDLITNQDSTQTFIKRSKILQEMRNYLNQQGFLEVETPMMHQIAGGAAARPFVTHHNALDATLYMRIAIELHLKRLIVGGLEKVYEIGRVFRNEGVSTRHNPEFTMIELYEAYADYHDIMDITENMIRHISEKVLGTAKVTYGEETIDLESKWKRIHMADAVKEETGVDFFNIQSDEDAKIAAKEHGIEITDNMKYGHILNEFFEQKVEETLIQPTFVYGHPIEISPLAKKNAEDPRFTDRFELFIVGREHGNAFTELNDPIDQRARFEAQLVEKEQGNDEAHEMDEDFIEALEYGMPPTGGLGIGIDRLVMLLTDSASIRDVLLFPYMRQK.

Mg(2+) contacts are provided by E406 and E413.

It belongs to the class-II aminoacyl-tRNA synthetase family. In terms of assembly, homodimer. The cofactor is Mg(2+).

Its subcellular location is the cytoplasm. It catalyses the reaction tRNA(Lys) + L-lysine + ATP = L-lysyl-tRNA(Lys) + AMP + diphosphate. This Staphylococcus saprophyticus subsp. saprophyticus (strain ATCC 15305 / DSM 20229 / NCIMB 8711 / NCTC 7292 / S-41) protein is Lysine--tRNA ligase.